Here is a 115-residue protein sequence, read N- to C-terminus: NADH-ubiquinone oxidoreductase chain 3 (115 aa).

The next 3 membrane-spanning stretches (helical) occupy residues 3–23 (LVIALLINTGLATILVMVAFW), 55–75 (FFLVAITFLLFDLEIAILLPI), and 87–107 (LLSLSGVLLALLTLGLAYEWL).

Belongs to the complex I subunit 3 family. In terms of assembly, core subunit of respiratory chain NADH dehydrogenase (Complex I) which is composed of 45 different subunits. Interacts with TMEM186. Interacts with TMEM242.

It is found in the mitochondrion inner membrane. The enzyme catalyses a ubiquinone + NADH + 5 H(+)(in) = a ubiquinol + NAD(+) + 4 H(+)(out). In terms of biological role, core subunit of the mitochondrial membrane respiratory chain NADH dehydrogenase (Complex I) which catalyzes electron transfer from NADH through the respiratory chain, using ubiquinone as an electron acceptor. Essential for the catalytic activity of complex I. This chain is NADH-ubiquinone oxidoreductase chain 3, found in Ornithorhynchus anatinus (Duckbill platypus).